Here is a 186-residue protein sequence, read N- to C-terminus: MCVYIVAGLGNPGPSYDKTRHNVGQMVLDILSGGARFRRHKTNNFYLSLGDILLVKPDAYMNLSGPVIASLMKFHSVSDLLVLHDDIDLPLGTLRFKQGGGTAGHRGLRSISDCLGSDYARLRVGIGRPENNQSIEDFVLSNFSPVQTDIISRTIQLAAEAVLHLRDNGFVGVKQFIAQTKSPSRT.

Residue Tyr-16 coordinates tRNA. His-21 acts as the Proton acceptor in catalysis. TRNA is bound by residues Tyr-60 and Asn-62.

It belongs to the PTH family. Monomer.

The protein resides in the cytoplasm. It carries out the reaction an N-acyl-L-alpha-aminoacyl-tRNA + H2O = an N-acyl-L-amino acid + a tRNA + H(+). Functionally, hydrolyzes ribosome-free peptidyl-tRNAs (with 1 or more amino acids incorporated), which drop off the ribosome during protein synthesis, or as a result of ribosome stalling. Catalyzes the release of premature peptidyl moieties from peptidyl-tRNA molecules trapped in stalled 50S ribosomal subunits, and thus maintains levels of free tRNAs and 50S ribosomes. In Tropheryma whipplei (strain TW08/27) (Whipple's bacillus), this protein is Peptidyl-tRNA hydrolase.